The primary structure comprises 169 residues: Small ribosomal subunit protein uS5 (169 aa).

Residues 13–76 (LVEKLVSVRR…EKARRNMKDV (64 aa)) enclose the S5 DRBM domain.

Belongs to the universal ribosomal protein uS5 family. Part of the 30S ribosomal subunit. Contacts proteins S4 and S8.

With S4 and S12 plays an important role in translational accuracy. Its function is as follows. Located at the back of the 30S subunit body where it stabilizes the conformation of the head with respect to the body. This chain is Small ribosomal subunit protein uS5, found in Hydrogenovibrio crunogenus (strain DSM 25203 / XCL-2) (Thiomicrospira crunogena).